The primary structure comprises 1006 residues: Unconventional myosin-Id (1006 aa).

At A2 the chain carries N-acetylalanine. Residues 9 to 695 (FGKADFVLMD…TLFTLEELRA (687 aa)) form the Myosin motor domain. ATP is bound at residue 102 to 109 (GESGAGKT). At S200 the chain carries Phosphoserine. Y536 bears the Phosphotyrosine mark. Residues 572–594 (MIALVDNLASKEPYYVRCIKPND) are actin-binding. IQ domains lie at 699–719 (VRVV…MRYK) and 721–741 (TKAA…SYIH). Positions 776–896 (LQSIFNRWRA…MDPTKQYKVM (121 aa)) are interaction with calmodulin. The TH1 domain occupies 812–1005 (GQRADLGLQR…RSGFILSVPG (194 aa)).

It belongs to the TRAFAC class myosin-kinesin ATPase superfamily. Myosin family. In terms of assembly, interacts (via the two IQ motifs) with calmodulin. Binds an additional calmodulin chain via a third, C-terminal region. Interacts with F-actin. As to expression, detected on tracheal epithelial cells, and on epithelial cells and brush border cells in duodenum, jejunum and ileum. Detected on myelinated white matter in the cerebellum, and the myelinated part of the optic nerve. Detected on mature oligodendrocites. Detected on the outside of the myelin sheet that surrounds axons (at protein level). Ubiquitous. Highest levels in adult brain, and spinal cord. Moderate levels in lung, kidney, liver and spleen. Low levels in testis and heart (at protein level).

Its subcellular location is the cytoplasm. The protein resides in the perikaryon. It is found in the cell projection. The protein localises to the dendrite. It localises to the early endosome. Its subcellular location is the cell cortex. Unconventional myosin that functions as actin-based motor protein with ATPase activity. Plays a role in endosomal protein trafficking, and especially in the transfer of cargo proteins from early to recycling endosomes. Required for normal planar cell polarity in ciliated tracheal cells, for normal rotational polarity of cilia, and for coordinated, unidirectional ciliary movement in the trachea. Required for normal, polarized cilia organization in brain ependymal epithelial cells. This Rattus norvegicus (Rat) protein is Unconventional myosin-Id (Myo1d).